The chain runs to 466 residues: 3-isopropylmalate dehydratase large subunit (466 aa).

C347, C407, and C410 together coordinate [4Fe-4S] cluster.

This sequence belongs to the aconitase/IPM isomerase family. LeuC type 1 subfamily. In terms of assembly, heterodimer of LeuC and LeuD. It depends on [4Fe-4S] cluster as a cofactor.

It carries out the reaction (2R,3S)-3-isopropylmalate = (2S)-2-isopropylmalate. Its pathway is amino-acid biosynthesis; L-leucine biosynthesis; L-leucine from 3-methyl-2-oxobutanoate: step 2/4. Catalyzes the isomerization between 2-isopropylmalate and 3-isopropylmalate, via the formation of 2-isopropylmaleate. This Acidiphilium cryptum (strain JF-5) protein is 3-isopropylmalate dehydratase large subunit.